The chain runs to 217 residues: Tegument protein BKRF4 (217 aa).

The interval 1 to 217 (MAMFLKSRGV…GNNNYNWPWL (217 aa)) is disordered. The segment covering 32-42 (YTLGSQASQSI) has biased composition (polar residues). Residues 43–79 (QEEDVSDTDESDYSDEDEEIDLEEEYPSDEDPSEGSD) show a composition bias toward acidic residues. The tract at residues 63 to 64 (DL) is interaction with host histones H3/H4. The segment at 81–84 (DPSW) is interaction with host H2A/H2B. Residues 89 to 102 (SDESDYSESDEDEA) are compositionally biased toward acidic residues. A compositionally biased stretch (low complexity) spans 106-132 (SQASRSSRVSPSTQQSSGLTPTPSFSR). Over residues 136–145 (RAPPRPPAPA) the composition is skewed to pro residues. The span at 208-217 (GNNNYNWPWL) shows a compositional bias: polar residues.

This sequence belongs to the lymphocryptovirus BKRF4 family. As to quaternary structure, forms a complex with the host H3/H4 dimer and histone chaperone ASF1. Also forms a complex with host H2A/H2B dimer. Interacts (via C-terminus) with BGLF2; this interaction is important for infectious virion production.

It is found in the virion tegument. The protein localises to the host nucleus. The protein resides in the host cytoplasm. Its subcellular location is the host perinuclear region. Functionally, histone-binding protein that binds to histones H2A/H2B, H3/H4 and cellular chromatin to overcome the host DNA damage response triggered by the viral genome ends. Interferes with histone ubiquitination and recruitment of repair proteins. The chain is Tegument protein BKRF4 from Epstein-Barr virus (strain GD1) (HHV-4).